The chain runs to 428 residues: A-kinase anchor protein 5 (428 aa).

The interval 1 to 170 (MEITVSEIQV…VTKTQTQSDD (170 aa)) is essential to the intracellular anchoring function. Disordered regions lie at residues 1–207 (MEIT…SPGE) and 237–313 (LEEK…TELS). Residues 10 to 32 (VESKDETRSAEVRPQDERQEEKA) show a composition bias toward basic and acidic residues. A lipid anchor (S-palmitoyl cysteine) is attached at cysteine 36. The span at 37–48 (FKRRKKAAKAMK) shows a compositional bias: basic residues. Over residues 57–68 (DAAKKCPPEARA) the composition is skewed to basic and acidic residues. Positions 76–96 (GGAWDSIKRLVTRRKRSESSK) match the AKAP CaM-binding motif. Threonine 87 carries the post-translational modification Phosphothreonine; by PKC. At serine 92 the chain carries Phosphoserine; by PKA. A Phosphoserine; by PKC modification is found at serine 94. Residue cysteine 129 is the site of S-palmitoyl cysteine attachment. Basic and acidic residues predominate over residues 133–156 (SKGEKRSNHSKIIEDSDRSVKVQE). A compositionally biased stretch (polar residues) spans 161–170 (VTKTQTQSDD). Composition is skewed to basic and acidic residues over residues 171-191 (QATK…KGDD) and 290-311 (PDWK…KDTE). Residues 389–410 (YETLLIETASSLVKNAIQLSIE) are RII-beta subunit binding domain. The tract at residues 411–428 (QLVNEMASDDNTINNRLQ) is tethers NFATC2 to CRAC channels.

Binding protein for dimer of the RII-beta regulatory subunit of cAMP-dependent protein kinase (PKA) and also for the protein kinase C (PKC) and the phosphatase calcineurin (PP2B). Each enzyme is inhibited when bound to the anchoring protein. Also binds the beta2-adrenergic receptor. Part of a complex containing AKAP5, ADCY5, ADCY6 and PDE4C. Interacts with ADCY8, and enhances its phosphorylation at lipid rafts. Interacts with ORAI1 (isoform alpha) (via N-terminus) upon store depletion and in response to LTC4. Does not interact with ORAI2 and ORAI3 paralogs. Interacts (via leucine zipper domain) with NFATC2/NFAT1. Interacts with calmodulin; the interaction is calcium-independent. Interacts with KCNQ2; the interaction may help KCNQ2 channel complex to retain calcium-bound calmodulin. Post-translationally, palmitoylated. Palmitoylation at Cys-36 and Cys-129 play a key role in the targeting of AKAP5 to lipid rafts. Palmitoylation by ZDHHC2 is required for AKAP5 function in LTP-stimulated recycling endosome exocytosis. In terms of tissue distribution, predominantly in brain, and to a lesser extent in adrenal medulla, lung and anterior pituitary.

It is found in the postsynaptic recycling endosome membrane. Its function is as follows. Multivalent scaffold protein that anchors the cAMP-dependent protein kinase/PKA to cytoskeletal and/or organelle-associated proteins, targeting the signal carried by cAMP to specific intracellular effectors. Association with the beta2-adrenergic receptor (beta2-AR) not only regulates beta2-AR signaling pathway, but also the activation by PKA by switching off the beta2-AR signaling cascade. Plays a role in long term synaptic potentiation by regulating protein trafficking from the dendritic recycling endosomes to the plasma membrane and controlling both structural and functional plasticity at excitatory synapses. Associates with ORAI1 pore-forming subunit of CRAC channels in Ca(2+) signaling microdomains where it recruits NFATC2/NFAT1 and couples store-operated Ca(2+) influx to calmodulin and calcineurin signaling and activation of NFAT-dependent transcriptional responses. This chain is A-kinase anchor protein 5 (AKAP5), found in Bos taurus (Bovine).